A 251-amino-acid polypeptide reads, in one-letter code: ATP synthase subunit a 2 (251 aa).

5 consecutive transmembrane segments (helical) span residues 35–55 (GQVF…SLLA), 94–114 (LPFI…GSLI), 133–153 (INTT…AGLS), 198–218 (LVVA…LMAL), and 219–239 (GLFT…AYIH).

Belongs to the ATPase A chain family. F-type ATPases have 2 components, CF(1) - the catalytic core - and CF(0) - the membrane proton channel. CF(1) has five subunits: alpha(3), beta(3), gamma(1), delta(1), epsilon(1). CF(0) has four main subunits: a, b, b' and c.

It localises to the cellular thylakoid membrane. In terms of biological role, key component of the proton channel; it plays a direct role in the translocation of protons across the membrane. The sequence is that of ATP synthase subunit a 2 from Crocosphaera subtropica (strain ATCC 51142 / BH68) (Cyanothece sp. (strain ATCC 51142)).